Reading from the N-terminus, the 267-residue chain is Glutamate 5-kinase (267 aa).

ATP is bound at residue K17. Positions 57, 144, and 156 each coordinate substrate. Residues 176–177 (SD) and 218–224 (TGGMATK) each bind ATP.

The protein belongs to the glutamate 5-kinase family.

The protein resides in the cytoplasm. It catalyses the reaction L-glutamate + ATP = L-glutamyl 5-phosphate + ADP. It participates in amino-acid biosynthesis; L-proline biosynthesis; L-glutamate 5-semialdehyde from L-glutamate: step 1/2. Functionally, catalyzes the transfer of a phosphate group to glutamate to form L-glutamate 5-phosphate. In Clostridium acetobutylicum (strain ATCC 824 / DSM 792 / JCM 1419 / IAM 19013 / LMG 5710 / NBRC 13948 / NRRL B-527 / VKM B-1787 / 2291 / W), this protein is Glutamate 5-kinase.